We begin with the raw amino-acid sequence, 510 residues long: NAD(P)H-quinone oxidoreductase subunit 2 A, chloroplastic (510 aa).

Transmembrane regions (helical) follow at residues 24–44 (LLLFHGSFIFPECILIFGLIL), 59–79 (WFYFISSTSLVMSITALLFRW), 99–119 (IFQFLILLCSTLCIPLSVEYI), 124–144 (MAITEFLLFVLTATLGGMFLC), 149–169 (LITIFVAPECFSLCSYLLSGY), 183–203 (YLLMGGASSSILVHGFSWLYG), 229–249 (ISIALLSITVGIGFKLSPAPF), 295–315 (WHLLLEILAILSMILGNLIAI), 323–343 (MLAYSSIGQIGYVIIGIIVGD), 347–367 (GYASMITYMLFYISMNLGTFA), 395–415 (ALSSALCLLSLGGIPPLAGFF), 418–438 (LHLFWCGWQAGLYFLVSIGLL), and 484–504 (MIVCVIASTIPGISMNPIIAI).

This sequence belongs to the complex I subunit 2 family. In terms of assembly, NDH is composed of at least 16 different subunits, 5 of which are encoded in the nucleus.

Its subcellular location is the plastid. The protein resides in the chloroplast thylakoid membrane. The catalysed reaction is a plastoquinone + NADH + (n+1) H(+)(in) = a plastoquinol + NAD(+) + n H(+)(out). It catalyses the reaction a plastoquinone + NADPH + (n+1) H(+)(in) = a plastoquinol + NADP(+) + n H(+)(out). In terms of biological role, NDH shuttles electrons from NAD(P)H:plastoquinone, via FMN and iron-sulfur (Fe-S) centers, to quinones in the photosynthetic chain and possibly in a chloroplast respiratory chain. The immediate electron acceptor for the enzyme in this species is believed to be plastoquinone. Couples the redox reaction to proton translocation, and thus conserves the redox energy in a proton gradient. The sequence is that of NAD(P)H-quinone oxidoreductase subunit 2 A, chloroplastic from Amborella trichopoda.